Reading from the N-terminus, the 504-residue chain is Glutamate--tRNA ligase (504 aa).

The 'HIGH' region signature appears at 14–24 (PSPTGYLHVGG). The short motif at 261-265 (KLSKR) is the 'KMSKS' region element. K264 contributes to the ATP binding site.

The protein belongs to the class-I aminoacyl-tRNA synthetase family. Glutamate--tRNA ligase type 1 subfamily. Monomer.

It localises to the cytoplasm. The catalysed reaction is tRNA(Glu) + L-glutamate + ATP = L-glutamyl-tRNA(Glu) + AMP + diphosphate. Functionally, catalyzes the attachment of glutamate to tRNA(Glu) in a two-step reaction: glutamate is first activated by ATP to form Glu-AMP and then transferred to the acceptor end of tRNA(Glu). The sequence is that of Glutamate--tRNA ligase from Chlorobium luteolum (strain DSM 273 / BCRC 81028 / 2530) (Pelodictyon luteolum).